The primary structure comprises 509 residues: tRNA-2-methylthio-N(6)-dimethylallyladenosine synthase (509 aa).

The segment covering 1 to 15 (MNEQQRLASQQANAS) has biased composition (polar residues). The segment at 1 to 22 (MNEQQRLASQQANASTKKEEKD) is disordered. The MTTase N-terminal domain occupies 66-184 (RKFYIRTYGC…LPYILKDAMF (119 aa)). [4Fe-4S] cluster contacts are provided by Cys-75, Cys-111, Cys-145, Cys-221, Cys-225, and Cys-228. One can recognise a Radical SAM core domain in the interval 207–437 (RRGDIKAWVN…NELVNEFSAK (231 aa)). Residues 440–503 (KKYEGQIVEV…TWSLNGELVE (64 aa)) form the TRAM domain.

The protein belongs to the methylthiotransferase family. MiaB subfamily. In terms of assembly, monomer. The cofactor is [4Fe-4S] cluster.

The protein resides in the cytoplasm. The catalysed reaction is N(6)-dimethylallyladenosine(37) in tRNA + (sulfur carrier)-SH + AH2 + 2 S-adenosyl-L-methionine = 2-methylsulfanyl-N(6)-dimethylallyladenosine(37) in tRNA + (sulfur carrier)-H + 5'-deoxyadenosine + L-methionine + A + S-adenosyl-L-homocysteine + 2 H(+). Functionally, catalyzes the methylthiolation of N6-(dimethylallyl)adenosine (i(6)A), leading to the formation of 2-methylthio-N6-(dimethylallyl)adenosine (ms(2)i(6)A) at position 37 in tRNAs that read codons beginning with uridine. The protein is tRNA-2-methylthio-N(6)-dimethylallyladenosine synthase of Bacillus cytotoxicus (strain DSM 22905 / CIP 110041 / 391-98 / NVH 391-98).